A 290-amino-acid chain; its full sequence is Prepilin leader peptidase/N-methyltransferase (290 aa).

The chain crosses the membrane as a helical span at residues 13–33 (AFVLCTILLGLLVGSFLNVVV). Cys72, Cys75, Cys97, and Cys100 together coordinate Zn(2+). 5 helical membrane passes run 128 to 148 (FTWQ…MSLI), 158 to 178 (VLVL…LFAS), 183 to 203 (LFGA…FKLV), 228 to 248 (ILPL…VIML), and 261 to 276 (FGPY…LLWG).

The protein belongs to the peptidase A24 family. Zn(2+) serves as cofactor.

The protein resides in the cell inner membrane. The enzyme catalyses Typically cleaves a -Gly-|-Phe- bond to release an N-terminal, basic peptide of 5-8 residues from type IV prepilin, and then N-methylates the new N-terminal amino group, the methyl donor being S-adenosyl-L-methionine.. Its function is as follows. Plays an essential role in type IV pili and type II pseudopili formation by proteolytically removing the leader sequence from substrate proteins and subsequently monomethylating the alpha-amino group of the newly exposed N-terminal phenylalanine. Substrates include proteins required for pilus biogenesis PilE, PilV, PilW, and PilX as well as some components of the type II general secretory apparatus GspG, GspH, GspI and GspJ. The chain is Prepilin leader peptidase/N-methyltransferase (pilD) from Pseudomonas aeruginosa (strain ATCC 15692 / DSM 22644 / CIP 104116 / JCM 14847 / LMG 12228 / 1C / PRS 101 / PAO1).